A 274-amino-acid polypeptide reads, in one-letter code: NH(3)-dependent NAD(+) synthetase (274 aa).

ATP is bound at residue 46 to 53 (GISGGQDS). D52 is a binding site for Mg(2+). A deamido-NAD(+)-binding site is contributed by R140. T160 serves as a coordination point for ATP. E165 is a Mg(2+) binding site. Deamido-NAD(+)-binding residues include K173 and D180. ATP is bound by residues K189 and T211. 260 to 261 (HK) is a deamido-NAD(+) binding site.

It belongs to the NAD synthetase family. As to quaternary structure, homodimer.

It catalyses the reaction deamido-NAD(+) + NH4(+) + ATP = AMP + diphosphate + NAD(+) + H(+). The protein operates within cofactor biosynthesis; NAD(+) biosynthesis; NAD(+) from deamido-NAD(+) (ammonia route): step 1/1. Catalyzes the ATP-dependent amidation of deamido-NAD to form NAD. Uses ammonia as a nitrogen source. This is NH(3)-dependent NAD(+) synthetase from Lactococcus lactis subsp. cremoris (strain SK11).